Consider the following 303-residue polypeptide: Probable 5-dehydro-4-deoxyglucarate dehydratase (303 aa).

Belongs to the DapA family.

The enzyme catalyses 5-dehydro-4-deoxy-D-glucarate + H(+) = 2,5-dioxopentanoate + CO2 + H2O. The protein operates within carbohydrate acid metabolism; D-glucarate degradation; 2,5-dioxopentanoate from D-glucarate: step 2/2. The chain is Probable 5-dehydro-4-deoxyglucarate dehydratase from Leptothrix cholodnii (strain ATCC 51168 / LMG 8142 / SP-6) (Leptothrix discophora (strain SP-6)).